A 297-amino-acid chain; its full sequence is Probable porphobilinogen deaminase (297 aa).

The residue at position 233 (C233) is an S-(dipyrrolylmethanemethyl)cysteine.

The protein belongs to the HMBS family. The cofactor is dipyrromethane.

It catalyses the reaction 4 porphobilinogen + H2O = hydroxymethylbilane + 4 NH4(+). Its pathway is porphyrin-containing compound metabolism; protoporphyrin-IX biosynthesis; coproporphyrinogen-III from 5-aminolevulinate: step 2/4. Functionally, tetrapolymerization of the monopyrrole PBG into the hydroxymethylbilane pre-uroporphyrinogen in several discrete steps. The protein is Probable porphobilinogen deaminase of Thermoplasma volcanium (strain ATCC 51530 / DSM 4299 / JCM 9571 / NBRC 15438 / GSS1).